A 94-amino-acid chain; its full sequence is uncharacterized protein (94 aa).

This is an uncharacterized protein from Schizosaccharomyces pombe (strain 972 / ATCC 24843) (Fission yeast).